The primary structure comprises 364 residues: RNA-binding protein 4 (364 aa).

RRM domains follow at residues 2 to 72 and 78 to 148; these read VKLF…ASKN and TKLH…LSTS. K79 participates in a covalent cross-link: Glycyl lysine isopeptide (Lys-Gly) (interchain with G-Cter in SUMO2). Phosphoserine is present on S86. K92 is covalently cross-linked (Glycyl lysine isopeptide (Lys-Gly) (interchain with G-Cter in SUMO2)). The CCHC-type zinc finger occupies 160–177; sequence SGCYRCGKEGHWSKECPI. The segment at 196-364 is interaction with TNPO3; that stretch reads AVRTPYTMSY…YADRARYSAF (169 aa). S309 is modified (phosphoserine).

As to quaternary structure, interacts with TNPO3; the interaction mediates nuclear import of the protein and is disrupted by nuclear Ran bound to GTP. Interacts with EIF4G1 and WT1. Interacts with EIF4A1; the interaction is modulated under stress-induced conditions. Interacts with AGO1. Interacts with AGO2; the interaction occurs under both cell proliferation and differentiation conditions and in an RNA- and phosphorylation-independent manner. Interacts with DDX5; the interaction occurs in an RNA-independent manner. Interacts with RBPMS; the interaction allows cooperative assembly of RNA-bound stable cell-specific alternative splicing regulatory complexes. Post-translationally, phosphorylated. Phosphorylated in vitro on Ser-309 by SRPK1. Phosphorylation on Ser-309 is induced upon cell stress signaling, which alters its subcellular localization and may modulate its activity on IRES-mediated mRNA translation. Phosphorylation on Ser-309 is induced upon cell muscle differentiation.

Its subcellular location is the nucleus. The protein resides in the nucleolus. It is found in the nucleus speckle. It localises to the cytoplasm. The protein localises to the cytoplasmic granule. Its function is as follows. RNA-binding factor involved in multiple aspects of cellular processes like alternative splicing of pre-mRNA and translation regulation. Modulates alternative 5'-splice site and exon selection. Acts as a muscle cell differentiation-promoting factor. Activates exon skipping of the PTB pre-mRNA during muscle cell differentiation. Antagonizes the activity of the splicing factor PTBP1 to modulate muscle cell-specific exon selection of alpha tropomyosin. Binds to intronic pyrimidine-rich sequence of the TPM1 and MAPT pre-mRNAs. Required for the translational activation of PER1 mRNA in response to circadian clock. Binds directly to the 3'-UTR of the PER1 mRNA. Exerts a suppressive activity on Cap-dependent translation via binding to CU-rich responsive elements within the 3'UTR of mRNAs, a process increased under stress conditions or during myocytes differentiation. Recruits EIF4A1 to stimulate IRES-dependent translation initiation in respons to cellular stress. Associates to internal ribosome entry segment (IRES) in target mRNA species under stress conditions. Plays a role for miRNA-guided RNA cleavage and translation suppression by promoting association of AGO2-containing miRNPs with their cognate target mRNAs. Associates with miRNAs during muscle cell differentiation. Binds preferentially to 5'-CGCGCG[GCA]-3' motif in vitro. This is RNA-binding protein 4 (RBM4) from Macaca fascicularis (Crab-eating macaque).